The primary structure comprises 128 residues: uncharacterized protein (128 aa).

3 helical membrane-spanning segments follow: residues 19–41 (MAIVTNTPIWVWCVLLCLLYVGS), 54–71 (LTFLPLIFLPIVIMSIMQ), and 75–97 (PLIAGFGFIVGLALGLFFRVDNL).

Its subcellular location is the cell membrane. This is an uncharacterized protein from Pasteurella multocida (strain Pm70).